An 82-amino-acid chain; its full sequence is UPF0180 protein BAA_1480 (82 aa).

Belongs to the UPF0180 family.

The chain is UPF0180 protein BAA_1480 from Bacillus anthracis (strain A0248).